Here is a 665-residue protein sequence, read N- to C-terminus: Fructose-1,6-bisphosphatase class 3 (665 aa).

This sequence belongs to the FBPase class 3 family. The cofactor is Mn(2+).

The catalysed reaction is beta-D-fructose 1,6-bisphosphate + H2O = beta-D-fructose 6-phosphate + phosphate. It participates in carbohydrate biosynthesis; gluconeogenesis. This chain is Fructose-1,6-bisphosphatase class 3, found in Clostridium acetobutylicum (strain ATCC 824 / DSM 792 / JCM 1419 / IAM 19013 / LMG 5710 / NBRC 13948 / NRRL B-527 / VKM B-1787 / 2291 / W).